The following is a 374-amino-acid chain: Aminomethyltransferase (374 aa).

The protein belongs to the GcvT family. In terms of assembly, the glycine cleavage system is composed of four proteins: P, T, L and H.

The enzyme catalyses N(6)-[(R)-S(8)-aminomethyldihydrolipoyl]-L-lysyl-[protein] + (6S)-5,6,7,8-tetrahydrofolate = N(6)-[(R)-dihydrolipoyl]-L-lysyl-[protein] + (6R)-5,10-methylene-5,6,7,8-tetrahydrofolate + NH4(+). The glycine cleavage system catalyzes the degradation of glycine. The polypeptide is Aminomethyltransferase (Prochlorococcus marinus (strain MIT 9303)).